Consider the following 45-residue polypeptide: Peroxidase 3 (45 aa).

This sequence belongs to the peroxidase family. Classical plant (class III) peroxidase subfamily. It depends on heme b as a cofactor. Ca(2+) serves as cofactor.

It is found in the secreted. It catalyses the reaction 2 a phenolic donor + H2O2 = 2 a phenolic radical donor + 2 H2O. Functionally, removal of H(2)O(2), oxidation of toxic reductants, biosynthesis and degradation of lignin, suberization, auxin catabolism, response to environmental stresses such as wounding, pathogen attack and oxidative stress. These functions might be dependent on each isozyme/isoform in each plant tissue. This Capsicum annuum (Capsicum pepper) protein is Peroxidase 3.